The primary structure comprises 30 residues: Alanine carboxypeptidase (30 aa).

The catalysed reaction is Release of a C-terminal alanine from a peptide or a variety of pteroyl or acyl groups.. The protein is Alanine carboxypeptidase of Geobacillus stearothermophilus (Bacillus stearothermophilus).